A 749-amino-acid chain; its full sequence is Catalase-peroxidase (749 aa).

Residues 98–234 (WHAAGTYRVQ…LAASHMGLIY (137 aa)) constitute a cross-link (tryptophyl-tyrosyl-methioninium (Trp-Tyr) (with M-260)). His-99 serves as the catalytic Proton acceptor. The segment at residues 234 to 260 (YVNPEGPNGEPDPVAAAHDIRTTFGRM) is a cross-link (tryptophyl-tyrosyl-methioninium (Tyr-Met) (with W-98)). Residue His-275 coordinates heme b.

This sequence belongs to the peroxidase family. Peroxidase/catalase subfamily. As to quaternary structure, homodimer or homotetramer. Requires heme b as cofactor. Post-translationally, formation of the three residue Trp-Tyr-Met cross-link is important for the catalase, but not the peroxidase activity of the enzyme.

The protein localises to the cytoplasm. It carries out the reaction H2O2 + AH2 = A + 2 H2O. It catalyses the reaction 2 H2O2 = O2 + 2 H2O. Bifunctional enzyme with both catalase and broad-spectrum peroxidase activity. This is Catalase-peroxidase from Mycosarcoma maydis (Corn smut fungus).